The following is an 81-amino-acid chain: Cytochrome b559 subunit alpha (81 aa).

A helical transmembrane segment spans residues 21–35 (VIHSITIPMLFIAGW). Position 23 (His-23) interacts with heme.

Belongs to the PsbE/PsbF family. In terms of assembly, heterodimer of an alpha subunit and a beta subunit. PSII is composed of 1 copy each of membrane proteins PsbA, PsbB, PsbC, PsbD, PsbE, PsbF, PsbH, PsbI, PsbJ, PsbK, PsbL, PsbM, PsbT, PsbX, PsbY, PsbZ, Psb30/Ycf12, peripheral proteins PsbO, CyanoQ (PsbQ), PsbU, PsbV and a large number of cofactors. It forms dimeric complexes. Heme b serves as cofactor.

The protein resides in the cellular thylakoid membrane. Functionally, this b-type cytochrome is tightly associated with the reaction center of photosystem II (PSII). PSII is a light-driven water:plastoquinone oxidoreductase that uses light energy to abstract electrons from H(2)O, generating O(2) and a proton gradient subsequently used for ATP formation. It consists of a core antenna complex that captures photons, and an electron transfer chain that converts photonic excitation into a charge separation. The protein is Cytochrome b559 subunit alpha of Picosynechococcus sp. (strain ATCC 27264 / PCC 7002 / PR-6) (Agmenellum quadruplicatum).